An 855-amino-acid chain; its full sequence is MSEARRDSTSSLQRKKPPWLKLDIPSAAPPAAEEPSFLQPLRRQVFLRSVSMPAETAHISSPHCELRRPVLQRQTSITQTIRRGAADWFGVSKESESTQKWQRKSIRHCSQRYGKLKPQVLRELDLPSQDNVSLTSTETPPPLYVGPCQLGMQKIIDPLARGRAFRVADDAAEGLSAPHTPVTPGAASLCSFSSSRSGFHRLPRRRKRESVAKMSFRAAAALMKGRSVRDGTLRRAQRRSFTPASFLEEDTTDFPDELDTSFFAREGILHEELSTYPDEVFESPSEAALKDWEKAPEQADLTGGALDRSELERSHLMLPLERGWRKQKEGAAAPQPKVRLRQEVVSTAGPRRGQRIAVPVRKLFAREKRPYGLGMVGRLTNRTYRKRIDSFVKRQIEDMDDHRPFFTYWLTFVHSLVTVLAVCIYGIAPVGFSQHETVDSVLRNRGVYENVKYVQQENFWIGPSSEALIHLGAKFSPCMRQDPQVHSFIRAAREREKHSACCVRNDRSGCVQTSEEECSSTLAVWVKWPVHPSAPELAGHKRQFGSVCHQDPRVCDEPSSEDPHEWPEDITRWPICTKNSAGNHTNHPHMDCVITGRPCCIGTKGRCEITSREYCDFMRGYFHEEATLCSQVHCMDDVCGLLPFLNPEVPDQFYRLWLSLFLHAGILHCLVSICFQMTVLRDLEKLAGWHRIAIIYLLSGVTGNLASAIFLPYRAEVGPAGSQFGILACLFVELFQSWQILARPWRAFFKLLAVVLFLFTFGLLPWIDNFAHISGFISGLFLSFAFLPYISFGKFDLYRKRCQIIVFQVVFLGLLAGLVVLFYFYPVRCEWCEFLTCIPFTDKFCEKYELDAQLH.

The tract at residues 1 to 36 is disordered; it reads MSEARRDSTSSLQRKKPPWLKLDIPSAAPPAAEEPS. Residues 1–411 lie on the Cytoplasmic side of the membrane; the sequence is MSEARRDSTS…HRPFFTYWLT (411 aa). Positions 25–36 are enriched in low complexity; that stretch reads PSAAPPAAEEPS. 2 positions are modified to phosphoserine: Ser-76 and Ser-176. Phosphothreonine is present on residues Thr-180 and Thr-183. Ser-390 carries the phosphoserine modification. A helical membrane pass occupies residues 412–432; sequence FVHSLVTVLAVCIYGIAPVGF. At 433 to 655 the chain is on the lumenal side; sequence SQHETVDSVL…NPEVPDQFYR (223 aa). Residue Asn-583 is glycosylated (N-linked (GlcNAc...) asparagine). Residues 656 to 676 form a helical membrane-spanning segment; sequence LWLSLFLHAGILHCLVSICFQ. Residues 677-691 are Cytoplasmic-facing; sequence MTVLRDLEKLAGWHR. The helical transmembrane segment at 692–712 threads the bilayer; it reads IAIIYLLSGVTGNLASAIFLP. Topologically, residues 713 to 714 are lumenal; that stretch reads YR. A helical transmembrane segment spans residues 715 to 735; sequence AEVGPAGSQFGILACLFVELF. Topologically, residues 736–746 are cytoplasmic; that stretch reads QSWQILARPWR. Residues 747 to 767 form a helical membrane-spanning segment; that stretch reads AFFKLLAVVLFLFTFGLLPWI. At 768-772 the chain is on the lumenal side; it reads DNFAH. Residues 773 to 793 form a helical membrane-spanning segment; it reads ISGFISGLFLSFAFLPYISFG. Over 794-803 the chain is Cytoplasmic; that stretch reads KFDLYRKRCQ. Residues 804-824 traverse the membrane as a helical segment; it reads IIVFQVVFLGLLAGLVVLFYF. The Lumenal segment spans residues 825-855; the sequence is YPVRCEWCEFLTCIPFTDKFCEKYELDAQLH.

Belongs to the peptidase S54 family. As to quaternary structure, homodimer, or homooligomer. Interacts with TGFA and HBEGF. Interacts with EGF; may retain EGF in the endoplasmic reticulum and regulates its degradation through the endoplasmic reticulum-associated degradation (ERAD). Interacts (via cytoplasmic N-terminus) with FRMD8/iTAP; this interaction leads to mutual protein stabilization. Interacts with ADAM17/TACE.

The protein resides in the endoplasmic reticulum membrane. It localises to the golgi apparatus membrane. Its function is as follows. Regulates ADAM17 protease, a sheddase of the epidermal growth factor (EGF) receptor ligands and TNF, thereby plays a role in sleep, cell survival, proliferation, migration and inflammation. Does not exhibit any protease activity on its own. The protein is Inactive rhomboid protein 1 (RHBDF1) of Plecturocebus moloch (Dusky titi monkey).